The chain runs to 350 residues: tRNA pseudouridine synthase D (350 aa).

F27 provides a ligand contact to substrate. D80 functions as the Nucleophile in the catalytic mechanism. N129 contributes to the substrate binding site. Positions 155–303 (GVPNYFGVQR…VDTTRRAINL (149 aa)) constitute a TRUD domain. F329 is a binding site for substrate.

Belongs to the pseudouridine synthase TruD family.

The catalysed reaction is uridine(13) in tRNA = pseudouridine(13) in tRNA. In terms of biological role, responsible for synthesis of pseudouridine from uracil-13 in transfer RNAs. The chain is tRNA pseudouridine synthase D from Proteus mirabilis (strain HI4320).